A 424-amino-acid polypeptide reads, in one-letter code: CinA-like protein (424 aa).

The protein belongs to the CinA family.

The chain is CinA-like protein from Shewanella putrefaciens (strain CN-32 / ATCC BAA-453).